The following is a 177-amino-acid chain: ATP synthase subunit delta (177 aa).

Belongs to the ATPase delta chain family. In terms of assembly, F-type ATPases have 2 components, F(1) - the catalytic core - and F(0) - the membrane proton channel. F(1) has five subunits: alpha(3), beta(3), gamma(1), delta(1), epsilon(1). F(0) has three main subunits: a(1), b(2) and c(10-14). The alpha and beta chains form an alternating ring which encloses part of the gamma chain. F(1) is attached to F(0) by a central stalk formed by the gamma and epsilon chains, while a peripheral stalk is formed by the delta and b chains.

The protein resides in the cell membrane. Its function is as follows. F(1)F(0) ATP synthase produces ATP from ADP in the presence of a proton or sodium gradient. F-type ATPases consist of two structural domains, F(1) containing the extramembraneous catalytic core and F(0) containing the membrane proton channel, linked together by a central stalk and a peripheral stalk. During catalysis, ATP synthesis in the catalytic domain of F(1) is coupled via a rotary mechanism of the central stalk subunits to proton translocation. In terms of biological role, this protein is part of the stalk that links CF(0) to CF(1). It either transmits conformational changes from CF(0) to CF(1) or is implicated in proton conduction. The polypeptide is ATP synthase subunit delta (Caldanaerobacter subterraneus subsp. tengcongensis (strain DSM 15242 / JCM 11007 / NBRC 100824 / MB4) (Thermoanaerobacter tengcongensis)).